The primary structure comprises 161 residues: Cytochrome c-type biogenesis protein CcmE (161 aa).

Residues 1 to 13 (MSWLPKSPKARRR) lie on the Cytoplasmic side of the membrane. A helical; Signal-anchor for type II membrane protein membrane pass occupies residues 14-34 (LMLVAAIAPVLAVAAGLTLWG). The Periplasmic portion of the chain corresponds to 35–161 (LSDSISFFYT…QRPEHQGDAL (127 aa)). Heme contacts are provided by His128 and Tyr132.

This sequence belongs to the CcmE/CycJ family.

The protein localises to the cell inner membrane. Functionally, heme chaperone required for the biogenesis of c-type cytochromes. Transiently binds heme delivered by CcmC and transfers the heme to apo-cytochromes in a process facilitated by CcmF and CcmH. This chain is Cytochrome c-type biogenesis protein CcmE, found in Phenylobacterium zucineum (strain HLK1).